A 356-amino-acid polypeptide reads, in one-letter code: 4-hydroxy-3-methylbut-2-en-1-yl diphosphate synthase (flavodoxin) (356 aa).

[4Fe-4S] cluster contacts are provided by C264, C267, C299, and E306.

The protein belongs to the IspG family. The cofactor is [4Fe-4S] cluster.

The catalysed reaction is (2E)-4-hydroxy-3-methylbut-2-enyl diphosphate + oxidized [flavodoxin] + H2O + 2 H(+) = 2-C-methyl-D-erythritol 2,4-cyclic diphosphate + reduced [flavodoxin]. Its pathway is isoprenoid biosynthesis; isopentenyl diphosphate biosynthesis via DXP pathway; isopentenyl diphosphate from 1-deoxy-D-xylulose 5-phosphate: step 5/6. Converts 2C-methyl-D-erythritol 2,4-cyclodiphosphate (ME-2,4cPP) into 1-hydroxy-2-methyl-2-(E)-butenyl 4-diphosphate. The sequence is that of 4-hydroxy-3-methylbut-2-en-1-yl diphosphate synthase (flavodoxin) from Natranaerobius thermophilus (strain ATCC BAA-1301 / DSM 18059 / JW/NM-WN-LF).